Consider the following 31-residue polypeptide: Chassatide C5 (31 aa).

The cyclopeptide (Gly-Asn) cross-link spans 1–31 (GVIPCGESCVFIPCISSVVGCSCKNKVCYRN). Intrachain disulfides connect Cys5-Cys21, Cys9-Cys23, and Cys14-Cys28.

In terms of processing, this is a cyclic peptide. Expressed in pedicel, root and stem but not in leaf and fruit (at protein level).

Its function is as follows. Probably participates in a plant defense mechanism. The chain is Chassatide C5 from Chassalia chartacea (Chassalia curviflora).